The sequence spans 1314 residues: Synergin gamma (1314 aa).

Positions 115-155 (MQKQFAEEQQKRFEQQQKLLEEERKRRQFEEQKQKLRLLSS) form a coiled coil. A disordered region spans residues 178 to 199 (GFSRDAKMHPTPASHPKKPGPS). The 94-residue stretch at 295–388 (NESLVPDAYK…QFPAAPIPTL (94 aa)) folds into the EH domain. The DFXDF motif 1 motif lies at 457-461 (DFQDF). A disordered region spans residues 460-498 (DFQDASKSGSLDDSFSDFQELPASSKTSNSQHGNSAPSL). Residues 462–496 (QDASKSGSLDDSFSDFQELPASSKTSNSQHGNSAP) show a composition bias toward polar residues. Phosphoserine is present on S473. N6-acetyllysine is present on K513. The segment at 518–786 (KGIAADKSSE…ADFHSSKFSS (269 aa)) is interaction with AP1G1. The residue at position 580 (S580) is a Phosphoserine. Residues 666–678 (LADDFGEFSLFGE) form an interaction with AP1G1, AP1G2 and GGA1 region. The DFXDF motif 2 signature appears at 690–694 (DFADF). S720 carries the post-translational modification Phosphoserine. An N6-acetyllysine modification is found at K744. S752 and S772 each carry phosphoserine. The short motif at 775 to 779 (DFADF) is the DFXDF motif 3 element. 6 positions are modified to phosphoserine: S812, S852, S855, S909, S919, and S935. Disordered stretches follow at residues 972 to 1026 (PQTS…DFGE) and 1073 to 1102 (SLSL…NTLN). A compositionally biased stretch (basic and acidic residues) spans 976-990 (EQKEYENRDYKDFTK). Positions 1001 to 1019 (EATCPSPASSGASQETPNE) are enriched in polar residues. S1006, S1073, S1075, S1087, and S1098 each carry phosphoserine. T1100 carries the phosphothreonine modification.

As to quaternary structure, self-associates. Interacts with GGA1 (via GAE domain). Interacts with GGA2 and GGA3. Interacts with AP1G1 (via GAE domain), a subunit of adapter protein complex AP-1. Interacts with AP1G2 (via GAE domain) a subunit of adapter protein complex AP-1. Component of the aftiphilin/p200/gamma-synergin complex, at least composed of AFTPH/aftiphilin, HEATR5B/p200a and SYNRG/gamma-synergin, which plays a role in the AP1G1/AP-1-mediated trafficking of transferrin from early to recycling endosomes. Within the complex interacts with AFTPH/aftiphilin and HEATR5B/p200a; the interactions are direct. Interacts (via EH domain) with SCAMP1.

Its subcellular location is the cytoplasm. It is found in the golgi apparatus. It localises to the trans-Golgi network membrane. The protein localises to the perinuclear region. The protein resides in the cytoplasmic vesicle. Its subcellular location is the clathrin-coated vesicle. In terms of biological role, plays a role in endocytosis and/or membrane trafficking at the trans-Golgi network (TGN). May act by linking the adapter protein complex AP-1 to other proteins. Component of clathrin-coated vesicles. Component of the aftiphilin/p200/gamma-synergin complex, which plays roles in AP1G1/AP-1-mediated protein trafficking including the trafficking of transferrin from early to recycling endosomes, and the membrane trafficking of furin and the lysosomal enzyme cathepsin D between the trans-Golgi network (TGN) and endosomes. This Homo sapiens (Human) protein is Synergin gamma.